The chain runs to 390 residues: GTPase Obg (390 aa).

Residues 1–159 (MKFVDEATIK…RELRLELLLL (159 aa)) enclose the Obg domain. In terms of domain architecture, OBG-type G spans 160 to 333 (ADVGMLGLPN…LCDELADFMD (174 aa)). GTP-binding positions include 166-173 (GLPNAGKS), 191-195 (FTTLI), 213-216 (DIPG), 283-286 (NKTD), and 314-316 (AAV). Mg(2+) contacts are provided by Ser-173 and Thr-193.

This sequence belongs to the TRAFAC class OBG-HflX-like GTPase superfamily. OBG GTPase family. As to quaternary structure, monomer. Mg(2+) is required as a cofactor.

It localises to the cytoplasm. In terms of biological role, an essential GTPase which binds GTP, GDP and possibly (p)ppGpp with moderate affinity, with high nucleotide exchange rates and a fairly low GTP hydrolysis rate. Plays a role in control of the cell cycle, stress response, ribosome biogenesis and in those bacteria that undergo differentiation, in morphogenesis control. This chain is GTPase Obg, found in Aliivibrio fischeri (strain ATCC 700601 / ES114) (Vibrio fischeri).